Here is a 440-residue protein sequence, read N- to C-terminus: Enolase (440 aa).

Substrate-binding residues include H159 and E168. E211 functions as the Proton donor in the catalytic mechanism. The Mg(2+) site is built by D245, E296, and D321. E296 and D321 together coordinate substrate. K346 functions as the Proton acceptor in the catalytic mechanism. Substrate contacts are provided by residues 373–376 (SHRS) and K397.

This sequence belongs to the enolase family. As to quaternary structure, homodimer. Mg(2+) serves as cofactor.

Its subcellular location is the cytoplasm. The enzyme catalyses (2R)-2-phosphoglycerate = phosphoenolpyruvate + H2O. The protein operates within carbohydrate degradation; glycolysis; pyruvate from D-glyceraldehyde 3-phosphate: step 4/5. The polypeptide is Enolase (eno-1) (Tuber borchii (White truffle)).